Consider the following 278-residue polypeptide: Indole-3-glycerol phosphate synthase (278 aa).

Belongs to the TrpC family.

The enzyme catalyses 1-(2-carboxyphenylamino)-1-deoxy-D-ribulose 5-phosphate + H(+) = (1S,2R)-1-C-(indol-3-yl)glycerol 3-phosphate + CO2 + H2O. It functions in the pathway amino-acid biosynthesis; L-tryptophan biosynthesis; L-tryptophan from chorismate: step 4/5. This is Indole-3-glycerol phosphate synthase from Pseudomonas fluorescens (strain Pf0-1).